The primary structure comprises 309 residues: Methionyl-tRNA formyltransferase (309 aa).

Serine 109 to proline 112 provides a ligand contact to (6S)-5,6,7,8-tetrahydrofolate.

It belongs to the Fmt family.

The catalysed reaction is L-methionyl-tRNA(fMet) + (6R)-10-formyltetrahydrofolate = N-formyl-L-methionyl-tRNA(fMet) + (6S)-5,6,7,8-tetrahydrofolate + H(+). In terms of biological role, attaches a formyl group to the free amino group of methionyl-tRNA(fMet). The formyl group appears to play a dual role in the initiator identity of N-formylmethionyl-tRNA by promoting its recognition by IF2 and preventing the misappropriation of this tRNA by the elongation apparatus. The chain is Methionyl-tRNA formyltransferase from Clostridium botulinum (strain Alaska E43 / Type E3).